The chain runs to 259 residues: Phosphatidylglycerol--prolipoprotein diacylglyceryl transferase (259 aa).

The next 4 membrane-spanning stretches (helical) occupy residues 12-32 (LSLH…VYLA), 46-66 (IIDF…IYYV), 83-103 (IWNG…VLFV), and 109-129 (VLNP…AQAI). Arg131 serves as a coordination point for a 1,2-diacyl-sn-glycero-3-phospho-(1'-sn-glycerol). 3 consecutive transmembrane segments (helical) span residues 167–187 (VPTF…IMVW), 194–214 (LVDG…RLVI), and 226–246 (GIRV…VFIF).

Belongs to the Lgt family.

The protein localises to the cell membrane. It carries out the reaction L-cysteinyl-[prolipoprotein] + a 1,2-diacyl-sn-glycero-3-phospho-(1'-sn-glycerol) = an S-1,2-diacyl-sn-glyceryl-L-cysteinyl-[prolipoprotein] + sn-glycerol 1-phosphate + H(+). The protein operates within protein modification; lipoprotein biosynthesis (diacylglyceryl transfer). Its function is as follows. Catalyzes the transfer of the diacylglyceryl group from phosphatidylglycerol to the sulfhydryl group of the N-terminal cysteine of a prolipoprotein, the first step in the formation of mature lipoproteins. The polypeptide is Phosphatidylglycerol--prolipoprotein diacylglyceryl transferase (Streptococcus equi subsp. equi (strain 4047)).